Reading from the N-terminus, the 449-residue chain is Deoxyguanosinetriphosphate triphosphohydrolase-like protein (449 aa).

A disordered region spans residues 1 to 27 (MTSSVWQERRHGEDKQRRNDHRSPYQR). The segment covering 7–27 (QERRHGEDKQRRNDHRSPYQR) has biased composition (basic and acidic residues). An HD domain is found at 59–255 (RLTHSLEVSQ…MELADDIAYA (197 aa)).

This sequence belongs to the dGTPase family. Type 2 subfamily.

This Shewanella baltica (strain OS195) protein is Deoxyguanosinetriphosphate triphosphohydrolase-like protein.